Consider the following 153-residue polypeptide: Pheromone-binding protein Gp-9 (153 aa).

An N-terminal signal peptide occupies residues 1–19 (MKTFVLHIFIFALVAFASA). 3 cysteine pairs are disulfide-bonded: cysteine 37–cysteine 77, cysteine 73–cysteine 129, and cysteine 118–cysteine 138.

Belongs to the PBP/GOBP family. As to quaternary structure, homodimer.

Its subcellular location is the secreted. In terms of biological role, colony queen number, a major feature of social organization, is associated with worker genotype for Gp-9. Colonies are headed by either a single reproductive queen (monogyne form) or multiple queens (polygyne form). Differences in worker Gp-9 genotypes between social forms may cause differences in workers' abilities to recognize queens and regulate their numbers. The sequence is that of Pheromone-binding protein Gp-9 from Solenopsis electra (Fire ant).